Reading from the N-terminus, the 229-residue chain is Translation initiation factor IF-3 (229 aa).

2 disordered regions span residues 1–21 (MAIQQRDSRGGTNRDARTNRR) and 184–229 (QAQR…AGPR). Over residues 192 to 203 (AAAQAAPAAAPQ) the composition is skewed to low complexity. The span at 204 to 221 (PGAPAAPPAAPAPAPAPE) shows a compositional bias: pro residues.

Belongs to the IF-3 family. In terms of assembly, monomer.

The protein resides in the cytoplasm. Its function is as follows. IF-3 binds to the 30S ribosomal subunit and shifts the equilibrium between 70S ribosomes and their 50S and 30S subunits in favor of the free subunits, thus enhancing the availability of 30S subunits on which protein synthesis initiation begins. The protein is Translation initiation factor IF-3 of Anaeromyxobacter sp. (strain Fw109-5).